Reading from the N-terminus, the 194-residue chain is Methyl-CpG-binding domain protein 3-like 1 (194 aa).

Residues 1 to 104 (MAKSSQRKQR…KLVPSYTGGS (104 aa)) are transcription repressor.

Belongs to the MBD3L family. As to expression, highly expressed in testis. Detected at low levels in pancreas. Not detected in the other tissues tested.

Its subcellular location is the nucleus. Functionally, transcriptional repressor. The protein is Methyl-CpG-binding domain protein 3-like 1 (MBD3L1) of Homo sapiens (Human).